Reading from the N-terminus, the 387-residue chain is Alpha-sarcoglycan (387 aa).

Positions M1–A24 are cleaved as a signal peptide. The Extracellular portion of the chain corresponds to Q25 to A290. N174 and N246 each carry an N-linked (GlcNAc...) asparagine glycan. The chain crosses the membrane as a helical span at residues L291–I311. Topologically, residues M312–H387 are cytoplasmic. Phosphoserine is present on S377.

The protein belongs to the sarcoglycan alpha/epsilon family. Cross-link to form 2 major subcomplexes: one consisting of SGCB, SGCD and SGCG and the other consisting of SGCB and SGCD. The association between SGCB and SGCG is particularly strong while SGCA is loosely associated with the other sarcoglycans. Interacts with the syntrophin SNTA1.

It is found in the cell membrane. It localises to the sarcolemma. Its subcellular location is the cytoplasm. The protein localises to the cytoskeleton. Functionally, component of the sarcoglycan complex, a subcomplex of the dystrophin-glycoprotein complex which forms a link between the F-actin cytoskeleton and the extracellular matrix. The sequence is that of Alpha-sarcoglycan (SGCA) from Oryctolagus cuniculus (Rabbit).